A 343-amino-acid chain; its full sequence is N-acetyl-gamma-glutamyl-phosphate reductase (343 aa).

Cys147 is a catalytic residue.

This sequence belongs to the NAGSA dehydrogenase family. Type 1 subfamily.

The protein resides in the cytoplasm. The catalysed reaction is N-acetyl-L-glutamate 5-semialdehyde + phosphate + NADP(+) = N-acetyl-L-glutamyl 5-phosphate + NADPH + H(+). Its pathway is amino-acid biosynthesis; L-arginine biosynthesis; N(2)-acetyl-L-ornithine from L-glutamate: step 3/4. Its function is as follows. Catalyzes the NADPH-dependent reduction of N-acetyl-5-glutamyl phosphate to yield N-acetyl-L-glutamate 5-semialdehyde. This Listeria monocytogenes serotype 4a (strain HCC23) protein is N-acetyl-gamma-glutamyl-phosphate reductase.